The chain runs to 146 residues: uncharacterized protein (146 aa).

Positions 31–119 (EKVMIVEGKS…RAYKEVAAAP (89 aa)) constitute a Toprim domain.

This is an uncharacterized protein from Bacillus subtilis (strain 168).